The chain runs to 239 residues: Glandular kallikrein, prostatic (239 aa).

Residues 1–236 (VIGGQECARD…YREWIERTMA (236 aa)) form the Peptidase S1 domain. 5 disulfide bridges follow: Cys-7-Cys-151, Cys-26-Cys-42, Cys-128-Cys-197, Cys-162-Cys-176, and Cys-187-Cys-212. His-41 (charge relay system) is an active-site residue. Residue Asn-78 is glycosylated (N-linked (GlcNAc...) asparagine). Asp-96 functions as the Charge relay system in the catalytic mechanism. A glycan (N-linked (GlcNAc...) asparagine) is linked at Asn-169. The Charge relay system role is filled by Ser-191.

Belongs to the peptidase S1 family. Kallikrein subfamily.

The catalysed reaction is Preferential cleavage of Arg-|-Xaa bonds in small molecule substrates. Highly selective action to release kallidin (lysyl-bradykinin) from kininogen involves hydrolysis of Met-|-Xaa or Leu-|-Xaa.. Glandular kallikreins cleave Met-Lys and Arg-Ser bonds in kininogen to release Lys-bradykinin. The sequence is that of Glandular kallikrein, prostatic from Cavia porcellus (Guinea pig).